The chain runs to 718 residues: Origin of replication complex subunit 3 (718 aa).

Over residues 26-43 the composition is skewed to low complexity; it reads GAAASSSSSSAPSLPSSG. The tract at residues 26 to 75 is disordered; that stretch reads GAAASSSSSSAPSLPSSGRARRRIDVSGLASPNPKPGKRSRDDDAAEDDD. The Nuclear localization signal motif lies at 659–666; it reads IKRKPHTS.

It belongs to the ORC3 family. As to quaternary structure, component of the origin recognition complex (ORC) composed of at least ORC1, ORC2, ORC3, ORC4, ORC5 and ORC6. ORC is regulated in a cell-cycle and development dependent manner. It is sequentially assembled at the exit from anaphase of mitosis and disassembled as cells enter S phase. In terms of tissue distribution, expressed at low levels in the shoot apical meristem (SAM), leaves, ears and roots (including root tips).

The protein resides in the nucleus. Component of the origin recognition complex (ORC) that binds origins of replication. DNA-binding is ATP-dependent. The specific DNA sequences that define origins of replication have not been identified yet. The polypeptide is Origin of replication complex subunit 3 (Oryza sativa subsp. japonica (Rice)).